We begin with the raw amino-acid sequence, 208 residues long: Ribosomal RNA large subunit methyltransferase E (208 aa).

The S-adenosyl-L-methionine site is built by glycine 62, tryptophan 64, aspartate 82, aspartate 98, and aspartate 123. Lysine 163 serves as the catalytic Proton acceptor.

The protein belongs to the class I-like SAM-binding methyltransferase superfamily. RNA methyltransferase RlmE family.

The protein resides in the cytoplasm. It carries out the reaction uridine(2552) in 23S rRNA + S-adenosyl-L-methionine = 2'-O-methyluridine(2552) in 23S rRNA + S-adenosyl-L-homocysteine + H(+). In terms of biological role, specifically methylates the uridine in position 2552 of 23S rRNA at the 2'-O position of the ribose in the fully assembled 50S ribosomal subunit. The chain is Ribosomal RNA large subunit methyltransferase E from Actinobacillus pleuropneumoniae serotype 5b (strain L20).